We begin with the raw amino-acid sequence, 410 residues long: Probable tRNA sulfurtransferase (410 aa).

The 110-residue stretch at Ala58–Arg167 folds into the THUMP domain. Residues Leu185–Leu186, His210–Phe211, Arg267, Gly289, and Gln298 contribute to the ATP site.

The protein belongs to the ThiI family.

It localises to the cytoplasm. It carries out the reaction [ThiI sulfur-carrier protein]-S-sulfanyl-L-cysteine + a uridine in tRNA + 2 reduced [2Fe-2S]-[ferredoxin] + ATP + H(+) = [ThiI sulfur-carrier protein]-L-cysteine + a 4-thiouridine in tRNA + 2 oxidized [2Fe-2S]-[ferredoxin] + AMP + diphosphate. The catalysed reaction is [ThiS sulfur-carrier protein]-C-terminal Gly-Gly-AMP + S-sulfanyl-L-cysteinyl-[cysteine desulfurase] + AH2 = [ThiS sulfur-carrier protein]-C-terminal-Gly-aminoethanethioate + L-cysteinyl-[cysteine desulfurase] + A + AMP + 2 H(+). It functions in the pathway cofactor biosynthesis; thiamine diphosphate biosynthesis. Functionally, catalyzes the ATP-dependent transfer of a sulfur to tRNA to produce 4-thiouridine in position 8 of tRNAs, which functions as a near-UV photosensor. Also catalyzes the transfer of sulfur to the sulfur carrier protein ThiS, forming ThiS-thiocarboxylate. This is a step in the synthesis of thiazole, in the thiamine biosynthesis pathway. The sulfur is donated as persulfide by IscS. This Nocardia farcinica (strain IFM 10152) protein is Probable tRNA sulfurtransferase.